A 311-amino-acid polypeptide reads, in one-letter code: Probable manganese-dependent inorganic pyrophosphatase (311 aa).

Mn(2+) is bound by residues His-9, Asp-13, Asp-15, Asp-77, His-99, and Asp-151.

This sequence belongs to the PPase class C family. Mn(2+) is required as a cofactor.

Its subcellular location is the cytoplasm. The enzyme catalyses diphosphate + H2O = 2 phosphate + H(+). The polypeptide is Probable manganese-dependent inorganic pyrophosphatase (Streptococcus equi subsp. zooepidemicus (strain MGCS10565)).